The primary structure comprises 277 residues: F420-dependent methylenetetrahydromethanopterin dehydrogenase (277 aa).

A disordered region spans residues 249–277; the sequence is EKATDSVSRKPHGADGKRLNKTKLMEKPE.

This sequence belongs to the MTD family.

It carries out the reaction 5,10-methylenetetrahydromethanopterin + oxidized coenzyme F420-(gamma-L-Glu)(n) + 2 H(+) = 5,10-methenyl-5,6,7,8-tetrahydromethanopterin + reduced coenzyme F420-(gamma-L-Glu)(n). It functions in the pathway one-carbon metabolism; methanogenesis from CO(2); 5,10-methylene-5,6,7,8-tetrahydromethanopterin from 5,10-methenyl-5,6,7,8-tetrahydromethanopterin (coenzyme F420 route): step 1/1. In terms of biological role, catalyzes the reversible reduction of methenyl-H(4)MPT(+) to methylene-H(4)MPT. In Methanococcus aeolicus (strain ATCC BAA-1280 / DSM 17508 / OCM 812 / Nankai-3), this protein is F420-dependent methylenetetrahydromethanopterin dehydrogenase.